A 249-amino-acid chain; its full sequence is tRNA pseudouridine synthase A (249 aa).

The active-site Nucleophile is the Asp53. Residue Tyr111 coordinates substrate.

This sequence belongs to the tRNA pseudouridine synthase TruA family. As to quaternary structure, homodimer.

The enzyme catalyses uridine(38/39/40) in tRNA = pseudouridine(38/39/40) in tRNA. Its function is as follows. Formation of pseudouridine at positions 38, 39 and 40 in the anticodon stem and loop of transfer RNAs. The sequence is that of tRNA pseudouridine synthase A from Streptococcus pneumoniae (strain 70585).